A 339-amino-acid chain; its full sequence is Isopentenyl-diphosphate delta-isomerase (339 aa).

A substrate-binding site is contributed by 7 to 8; sequence RK. FMN is bound by residues Ser65, 66–68, Ser96, and Asn125; that span reads SMT. 96-98 contributes to the substrate binding site; the sequence is SQR. Gln160 serves as a coordination point for substrate. Mg(2+) is bound at residue Glu161. FMN contacts are provided by residues Lys192, Thr222, and 293–294; that span reads AG.

The protein belongs to the IPP isomerase type 2 family. In terms of assembly, homooctamer. Dimer of tetramers. The cofactor is FMN. It depends on NADPH as a cofactor. Mg(2+) is required as a cofactor.

The protein resides in the cytoplasm. It catalyses the reaction isopentenyl diphosphate = dimethylallyl diphosphate. Involved in the biosynthesis of isoprenoids. Catalyzes the 1,3-allylic rearrangement of the homoallylic substrate isopentenyl (IPP) to its allylic isomer, dimethylallyl diphosphate (DMAPP). The chain is Isopentenyl-diphosphate delta-isomerase from Vibrio parahaemolyticus serotype O3:K6 (strain RIMD 2210633).